Reading from the N-terminus, the 1671-residue chain is Hybrid signal transduction protein dokA (1671 aa).

A compositionally biased stretch (basic and acidic residues) spans 1-10; the sequence is MSSPHIELHS. Disordered stretches follow at residues 1–27, 42–89, 126–241, 365–451, 579–603, and 629–651; these read MSSP…ELTG, DDLN…DKND, QQQQ…RRSS, YSNN…NNEE, HNHN…SPFI, and SNSS…SSNA. A compositionally biased stretch (polar residues) spans 11–27; it reads QRTLSPQPSSNNFELTG. Low complexity-rich tracts occupy residues 45–83 and 126–167; these read NNNN…NNNN and QQQQ…QQQE. The segment covering 168 to 179 has biased composition (acidic residues); sequence QEQEQEQEQEQE. The segment covering 367–449 has biased composition (low complexity); the sequence is NNNNNTNTNN…NNNNNNNNNN (83 aa). Positions 591 to 600 are enriched in polar residues; that stretch reads TTQRASSTDS. The Histidine kinase domain maps to 1050–1276; it reads NISHELRTPC…TFWFAIKVSI (227 aa). Residues 1519-1633 enclose the Response regulatory domain; sequence YILVAEDNDI…RLQKTLSDWI (115 aa).

In terms of processing, under osmotic stress conditions, this protein undergoes phosphorylation at a serine residue in the kinase core, which is not due to an autophosphorylation of dokA. This is in contrast to the classic two-component paradigm, which predicts only histidine and aspartate phosphorylation.

Part of the osmoregulatory pathway which leads to the increase of intracellular cAMP concentration in response to hyperosmotic stress. Thought to negatively regulate the rdeA-regA pathway by acting as a phosphatase towards the HPt protein rdeA. Has probably no histidine kinase activity. This is Hybrid signal transduction protein dokA (dokA) from Dictyostelium discoideum (Social amoeba).